Reading from the N-terminus, the 251-residue chain is Pyruvate formate-lyase-activating enzyme (251 aa).

The Radical SAM core domain occupies 15–244 (VDGPGLRYIL…KAAYRYVNFK (230 aa)). [4Fe-4S] cluster-binding residues include Cys29, Cys33, and Cys36. S-adenosyl-L-methionine is bound by residues 35–37 (YCH), Gly79, 134–136 (DIK), and His207.

This sequence belongs to the organic radical-activating enzymes family. Requires [4Fe-4S] cluster as cofactor.

It is found in the cytoplasm. It catalyses the reaction glycyl-[formate C-acetyltransferase] + reduced [flavodoxin] + S-adenosyl-L-methionine = glycin-2-yl radical-[formate C-acetyltransferase] + semiquinone [flavodoxin] + 5'-deoxyadenosine + L-methionine + H(+). Activation of pyruvate formate-lyase under anaerobic conditions by generation of an organic free radical, using S-adenosylmethionine and reduced flavodoxin as cosubstrates to produce 5'-deoxy-adenosine. The chain is Pyruvate formate-lyase-activating enzyme (pflA) from Staphylococcus aureus (strain N315).